The primary structure comprises 1611 residues: Non-structural polyprotein 1AB (1611 aa).

Positions 124-187 (TTSNLIARAM…ELHLLKELGK (64 aa)) form a coiled coil. Helical transmembrane passes span 195-215 (AFSF…LHYT), 329-348 (ISYY…ALAT), 353-373 (MVMV…PITV), 375-395 (IASV…LVFP), 397-417 (FLPY…FFSS), 426-446 (VSTA…VIVL), and 450-470 (SIPM…SVGV). Residues H550, D582, and S647 each act as charge relay system; for serine protease activity in the active site. An O-(5'-phospho-RNA)-tyrosine modification is found at Y833. Residues 1352 to 1486 (RYYVELDWTR…AVDKRFINSY (135 aa)) enclose the RdRp catalytic domain.

The protein belongs to the astroviridae polyprotein 1AB family. As to quaternary structure, monomer. In terms of processing, cleaved by the viral and host proteases. The protease is probably autocatalytically cleaved.

Its subcellular location is the host membrane. It carries out the reaction RNA(n) + a ribonucleoside 5'-triphosphate = RNA(n+1) + diphosphate. Functionally, responsible for the cleavage of the polyprotein into functional products. Its function is as follows. Protein covalently attached to the 5' extremity of the genomic and subgenomic RNAs. It may serve as a primer for the replicase. In Turkey astrovirus 1 (TAstV-1), this protein is Non-structural polyprotein 1AB (ORF1).